A 335-amino-acid polypeptide reads, in one-letter code: Probable cytosolic iron-sulfur protein assembly protein Ciao1 (335 aa).

7 WD repeats span residues 12 to 51, 57 to 96, 101 to 140, 146 to 185, 192 to 231, 250 to 289, and 301 to 335; these read GHKG…WSTK, GHKR…FECN, GHEN…EFEC, SHTQ…NDWD, SHTS…NSAG, QHSR…KPDE, and AHDQ…KVTE.

Belongs to the WD repeat CIA1 family.

In terms of biological role, essential component of the cytosolic iron-sulfur (Fe/S) protein assembly machinery. Required for the maturation of extramitochondrial Fe/S proteins. The polypeptide is Probable cytosolic iron-sulfur protein assembly protein Ciao1 (Drosophila yakuba (Fruit fly)).